The sequence spans 101 residues: Small ribosomal subunit protein uS14 (101 aa).

It belongs to the universal ribosomal protein uS14 family. Part of the 30S ribosomal subunit. Contacts proteins S3 and S10.

In terms of biological role, binds 16S rRNA, required for the assembly of 30S particles and may also be responsible for determining the conformation of the 16S rRNA at the A site. The sequence is that of Small ribosomal subunit protein uS14 from Histophilus somni (strain 2336) (Haemophilus somnus).